Consider the following 167-residue polypeptide: Small ribosomal subunit protein uS5 (167 aa).

The S5 DRBM domain maps to 12–75 (LEERVVTINR…EDAKKNMVLV (64 aa)).

This sequence belongs to the universal ribosomal protein uS5 family. As to quaternary structure, part of the 30S ribosomal subunit. Contacts proteins S4 and S8.

In terms of biological role, with S4 and S12 plays an important role in translational accuracy. Functionally, located at the back of the 30S subunit body where it stabilizes the conformation of the head with respect to the body. This chain is Small ribosomal subunit protein uS5, found in Listeria monocytogenes serotype 4b (strain F2365).